A 367-amino-acid chain; its full sequence is Quinolinate synthase (367 aa).

Iminosuccinate contacts are provided by His-45 and Ser-62. Cys-109 serves as a coordination point for [4Fe-4S] cluster. Iminosuccinate is bound by residues 140–142 (YVN) and Ser-161. Cys-229 provides a ligand contact to [4Fe-4S] cluster. Residues 255–257 (HPE) and Thr-272 each bind iminosuccinate. A [4Fe-4S] cluster-binding site is contributed by Cys-319.

It belongs to the quinolinate synthase family. Type 3 subfamily. It depends on [4Fe-4S] cluster as a cofactor.

The protein localises to the cytoplasm. The enzyme catalyses iminosuccinate + dihydroxyacetone phosphate = quinolinate + phosphate + 2 H2O + H(+). It functions in the pathway cofactor biosynthesis; NAD(+) biosynthesis; quinolinate from iminoaspartate: step 1/1. Catalyzes the condensation of iminoaspartate with dihydroxyacetone phosphate to form quinolinate. The protein is Quinolinate synthase of Geobacillus thermodenitrificans (strain NG80-2).